The following is an 807-amino-acid chain: 85/88 kDa calcium-independent phospholipase A2 (807 aa).

Ser-13 bears the Phosphoserine mark. ANK repeat units follow at residues 120 to 147 (WTVT…ANST), 151 to 181 (EGCT…QMDV), 185 to 215 (KGET…GLNQ), 219 to 248 (QGLT…RCNI), 251 to 281 (PGGF…QIHS), 286 to 312 (YGAS…DVDS), 316 to 345 (SGNT…NAGA), 349 to 378 (HGNT…EVDT), and 382 to 403 (FGET…KALL). 2 consecutive transmembrane segments (helical) span residues 481-501 (LLCL…LIAI) and 512-532 (LFDW…ILHS). The PNPLA domain occupies 482–666 (LCLDGGGVKG…LANNPTLDAM (185 aa)). Positions 486–491 (GGGVKG) match the GXGXXG motif. The GXSXG signature appears at 518–522 (GTSTG). Ser-520 serves as the catalytic Nucleophile. Asp-653 (proton acceptor) is an active-site residue. The short motif at 653-655 (DGG) is the DGA/G element. Residues 678-687 (RKGQGNKVKK) are calmodulin-binding (1-9-14 motif). The segment at 749–760 (AWCEMVGIQYFR) is calmodulin-binding (IQ motif).

In terms of assembly, homodimer formed by catalytic domains tightly interacting through a large hydrophobic interface. The contact area involves 3 alpha helices, several loops and a part of the beta sheet from each monomer. Both active sites of the dimer are in close proximity adopting an open conformation that provide sufficient space for phospholipid access and favoring cooperativity in deacylation-reacylation reactions. Each monomer has 9 ankyrin repeats stacked side-by-side in an elongated structure oriented outwards from the catalytic core. Expressed in pancreatic beta-cells. Expressed in skeletal muscle (at protein level).

It localises to the cytoplasm. The protein localises to the cell membrane. It is found in the mitochondrion. Its subcellular location is the cell projection. The protein resides in the pseudopodium. It catalyses the reaction a 1,2-diacyl-sn-glycero-3-phosphocholine + H2O = a 1-acyl-sn-glycero-3-phosphocholine + a fatty acid + H(+). It carries out the reaction a 1-O-alkyl-2-acyl-sn-glycero-3-phosphocholine + H2O = a 1-O-alkyl-sn-glycero-3-phosphocholine + a fatty acid + H(+). The catalysed reaction is 1,2-dihexadecanoyl-sn-glycero-3-phosphocholine + H2O = 1-hexadecanoyl-sn-glycero-3-phosphocholine + hexadecanoate + H(+). The enzyme catalyses 1-hexadecanoyl-2-(9Z-octadecenoyl)-sn-glycero-3-phosphocholine + H2O = 1-hexadecanoyl-sn-glycero-3-phosphocholine + (9Z)-octadecenoate + H(+). It catalyses the reaction 1-hexadecanoyl-2-(9Z,12Z-octadecadienoyl)-sn-glycero-3-phosphocholine + H2O = (9Z,12Z)-octadecadienoate + 1-hexadecanoyl-sn-glycero-3-phosphocholine + H(+). It carries out the reaction 1-hexadecanoyl-2-(5Z,8Z,11Z,14Z-eicosatetraenoyl)-sn-glycero-3-phosphocholine + H2O = 1-hexadecanoyl-sn-glycero-3-phosphocholine + (5Z,8Z,11Z,14Z)-eicosatetraenoate + H(+). The catalysed reaction is 1-octadecanoyl-2-(5Z,8Z,11Z,14Z-eicosatetraenoyl)-sn-glycero-3-phosphocholine + H2O = 1-octadecanoyl-sn-glycero-3-phosphocholine + (5Z,8Z,11Z,14Z)-eicosatetraenoate + H(+). The enzyme catalyses 1-hexadecanoyl-2-(5Z,8Z,11Z,14Z-eicosatetraenoyl)-sn-glycero-3-phosphoethanolamine + H2O = 1-hexadecanoyl-sn-glycero-3-phosphoethanolamine + (5Z,8Z,11Z,14Z)-eicosatetraenoate + H(+). It catalyses the reaction 1,2-dihexadecanoyl-sn-glycero-3-phosphate + H2O = 1-hexadecanoyl-sn-glycero-3-phosphate + hexadecanoate + H(+). It carries out the reaction a 1-acyl-sn-glycero-3-phosphocholine + H2O = sn-glycerol 3-phosphocholine + a fatty acid + H(+). The catalysed reaction is 1-hexadecanoyl-sn-glycero-3-phosphocholine + H2O = sn-glycerol 3-phosphocholine + hexadecanoate + H(+). The enzyme catalyses 1-(5Z,8Z,11Z,14Z-eicosatetraenoyl)-sn-glycero-3-phosphocholine + H2O = sn-glycerol 3-phosphocholine + (5Z,8Z,11Z,14Z)-eicosatetraenoate + H(+). It catalyses the reaction 2-(5Z,8Z,11Z,14Z)-eicosatetraenoyl-sn-glycero-3-phosphocholine + H2O = sn-glycerol 3-phosphocholine + (5Z,8Z,11Z,14Z)-eicosatetraenoate + H(+). It carries out the reaction 1-O-hexadecyl-2-(5Z,8Z,11Z,14Z)-eicosatetraenoyl-sn-glycero-3-phosphocholine + H2O = 1-O-hexadecyl-sn-glycero-3-phosphocholine + (5Z,8Z,11Z,14Z)-eicosatetraenoate + H(+). The catalysed reaction is 1-O-hexadecyl-2-acetyl-sn-glycero-3-phosphocholine + H2O = 1-O-hexadecyl-sn-glycero-3-phosphocholine + acetate + H(+). The enzyme catalyses hexadecanoyl-CoA + H2O = hexadecanoate + CoA + H(+). It catalyses the reaction 1',3'-bis[1,2-di-(9Z-octadecenoyl)-sn-glycero-3-phospho]-glycerol + H2O = 1'-[1,2-di-(9Z-octadecenoyl)-sn-glycero-3-phospho]-3'-[1-(9Z-octadecenoyl)-sn-glycero-3-phospho]-glycerol + (9Z)-octadecenoate + H(+). It carries out the reaction 1'-[1,2-di-(9Z-octadecenoyl)-sn-glycero-3-phospho]-3'-[1-(9Z-octadecenoyl)-sn-glycero-3-phospho]-glycerol + H2O = 1',3'-bis-[1-(9Z-octadecenoyl)-sn-glycero-3-phospho]-glycerol + (9Z)-octadecenoate + H(+). The catalysed reaction is 1',3'-bis-[1,2-di-(9Z,12Z-octadecadienoyl)-sn-glycero-3-phospho]-glycerol + H2O = 1'-[1,2-di-(9Z,12Z-octadecadienoyl)-sn-glycero-3-phospho]-3'-[1-(9Z,12Z-octadecadienoyl)-sn-glycero-3-phospho]-glycerol + (9Z,12Z)-octadecadienoate + H(+). The enzyme catalyses 1-octadecanoyl-2-(15-hydroxy-(5Z,8Z,11Z,13E)-eicosatetraenoyl)-sn-glycero-3-phosphoethanolamine + H2O = 1-octadecanoyl-sn-glycero-3-phosphoethanolamine + 15-hydroxy-(5Z,8Z,11Z,13E)-eicosatetraenoate + H(+). With respect to regulation, activated by ATP. Inhibited by calcium-activated calmodulin. Inhibited by bromoenol lactone (BEL). Calcium-independent phospholipase involved in phospholipid remodeling with implications in cellular membrane homeostasis, mitochondrial integrity and signal transduction. Hydrolyzes the ester bond of the fatty acyl group attached at sn-1 or sn-2 position of phospholipids (phospholipase A1 and A2 activity respectively), producing lysophospholipids that are used in deacylation-reacylation cycles. Hydrolyzes both saturated and unsaturated long fatty acyl chains in various glycerophospholipid classes such as phosphatidylcholines, phosphatidylethanolamines and phosphatidates, with a preference for hydrolysis at sn-2 position. Can further hydrolyze lysophospholipids carrying saturated fatty acyl chains (lysophospholipase activity). Upon oxidative stress, contributes to remodeling of mitochondrial phospholipids in pancreatic beta cells, in a repair mechanism to reduce oxidized lipid content. Preferentially hydrolyzes oxidized polyunsaturated fatty acyl chains from cardiolipins, yielding monolysocardiolipins that can be reacylated with unoxidized fatty acyls to regenerate native cardiolipin species. Hydrolyzes oxidized glycerophosphoethanolamines present in pancreatic islets, releasing oxidized polyunsaturated fatty acids such as hydroxyeicosatetraenoates (HETEs). Has thioesterase activity toward fatty-acyl CoA releasing CoA-SH known to facilitate fatty acid transport and beta-oxidation in mitochondria particularly in skeletal muscle. Plays a role in regulation of membrane dynamics and homeostasis. Selectively hydrolyzes sn-2 arachidonoyl group in plasmalogen phospholipids, structural components of lipid rafts and myelin. Regulates F-actin polymerization at the pseudopods, which is required for both speed and directionality of MCP1/CCL2-induced monocyte chemotaxis. Targets membrane phospholipids to produce potent lipid signaling messengers. Generates lysophosphatidate (LPA, 1-acyl-glycerol-3-phosphate), which acts via G-protein receptors in various cell types. Has phospholipase A2 activity toward platelet-activating factor (PAF, 1-O-alkyl-2-acetyl-sn-glycero-3-phosphocholine), likely playing a role in inactivation of this potent pro-inflammatory signaling lipid. In response to glucose, amplifies calcium influx in pancreatic beta cells to promote INS secretion. The chain is 85/88 kDa calcium-independent phospholipase A2 (Pla2g6) from Rattus norvegicus (Rat).